The following is a 245-amino-acid chain: CMRF35-like molecule 3 (245 aa).

Residues 1–18 (MWQFPALLFLFLPGCCTA) form the signal peptide. Positions 19-124 (QDPVTGPEEV…TDPMFKVNVN (106 aa)) constitute an Ig-like V-type domain. Over 19–189 (QDPVTGPEEV…FIWSLLSSIS (171 aa)) the chain is Extracellular. Cys-40 and Cys-108 form a disulfide bridge. 2 important for maintaining surface expression and for interaction with FCER1G regions span residues 177-182 (NSLFIW) and 189-198 (SFLLMVFVVV). Residues 190-210 (FLLMVFVVVPLLLSMLSAVLW) form a helical membrane-spanning segment. The Cytoplasmic portion of the chain corresponds to 211–245 (VNRPQRHYGGGEIGLVETHRSDALDGEKHFPGDEK).

The protein belongs to the CD300 family. As to quaternary structure, interacts with FCER1G; the interaction may be indirect. Interacts with TLR9. In terms of tissue distribution, highly expressed in bone marrow-derived mast cells and macrophages, peripheral blood monocytes and CD11c+ cells, with weaker expression detected in CD11b cells in bone marrow and peripheral blood. Not detected in B220+ cells in bone marrow or spleen, in Thy-1.2+ or CD3+ cells in peripheral blood, spleen or thymus, or in NK1.1+ cells in spleen (at protein level). Widely expressed in various tissues including heart, liver, spleen, lung, kidney, brain, bone marrow, thymus, axillary lymph node and mesenteric lymph node. Highly expressed in macrophage cell lines J774.1 and RAW 264.7 and in mast cell line MC/9. Weak expression detected in B-lineage cell lines WEHI-231 and A20 and in dendritic cell line DC2.4. Not detected in other myeloid cell lines or T-lineage cell lines.

Its subcellular location is the cell membrane. The protein resides in the early endosome. The protein localises to the lysosome. Acts as an activating receptor inducing cytokine production in mast cells. Can act as a positive regulator of TLR9 signaling in macrophages, leading to enhanced production of pro-inflammatory cytokines. The protein is CMRF35-like molecule 3 of Mus musculus (Mouse).